The chain runs to 336 residues: Holliday junction branch migration complex subunit RuvB (336 aa).

The tract at residues 1 to 182 is large ATPase domain (RuvB-L); sequence MKERIVNLET…FGMSFRMQFY (182 aa). ATP-binding positions include Leu-21, Arg-22, Gly-63, Lys-66, Thr-67, Ser-68, 129–131, Arg-172, Tyr-182, and Arg-219; that span reads EDF. A Mg(2+)-binding site is contributed by Thr-67. The interval 183-253 is small ATPAse domain (RuvB-S); it reads SPSELALIIK…ITLHALNELG (71 aa). The head domain (RuvB-H) stretch occupies residues 256–336; sequence ELGFDEADLA…IPTLKSQSLF (81 aa). 2 residues coordinate DNA: Arg-310 and Arg-315.

The protein belongs to the RuvB family. Homohexamer. Forms an RuvA(8)-RuvB(12)-Holliday junction (HJ) complex. HJ DNA is sandwiched between 2 RuvA tetramers; dsDNA enters through RuvA and exits via RuvB. An RuvB hexamer assembles on each DNA strand where it exits the tetramer. Each RuvB hexamer is contacted by two RuvA subunits (via domain III) on 2 adjacent RuvB subunits; this complex drives branch migration. In the full resolvosome a probable DNA-RuvA(4)-RuvB(12)-RuvC(2) complex forms which resolves the HJ.

The protein resides in the cytoplasm. It catalyses the reaction ATP + H2O = ADP + phosphate + H(+). Its function is as follows. The RuvA-RuvB-RuvC complex processes Holliday junction (HJ) DNA during genetic recombination and DNA repair, while the RuvA-RuvB complex plays an important role in the rescue of blocked DNA replication forks via replication fork reversal (RFR). RuvA specifically binds to HJ cruciform DNA, conferring on it an open structure. The RuvB hexamer acts as an ATP-dependent pump, pulling dsDNA into and through the RuvAB complex. RuvB forms 2 homohexamers on either side of HJ DNA bound by 1 or 2 RuvA tetramers; 4 subunits per hexamer contact DNA at a time. Coordinated motions by a converter formed by DNA-disengaged RuvB subunits stimulates ATP hydrolysis and nucleotide exchange. Immobilization of the converter enables RuvB to convert the ATP-contained energy into a lever motion, pulling 2 nucleotides of DNA out of the RuvA tetramer per ATP hydrolyzed, thus driving DNA branch migration. The RuvB motors rotate together with the DNA substrate, which together with the progressing nucleotide cycle form the mechanistic basis for DNA recombination by continuous HJ branch migration. Branch migration allows RuvC to scan DNA until it finds its consensus sequence, where it cleaves and resolves cruciform DNA. The chain is Holliday junction branch migration complex subunit RuvB from Helicobacter acinonychis (strain Sheeba).